The primary structure comprises 1339 residues: Retrotransposon Gag-like protein 9 (1339 aa).

Polar residues-rich tracts occupy residues 533–545 (TVPT…TQKT), 679–693 (SGTK…TTSG), and 700–711 (TRLSGPGATSTP). Disordered stretches follow at residues 533-555 (TVPT…PMST), 679-711 (SGTK…TSTP), 845-864 (GVMS…SRPQ), 880-901 (PATA…LSTL), 982-1010 (ATSL…GAGS), and 1078-1116 (ATDS…PPKE). A compositionally biased stretch (low complexity) spans 891-901 (RSPASSTLSTL). Polar residues predominate over residues 1078-1106 (ATDSGEASTSHTRFTAPGSKSTPHMTSTA).

This Mus musculus (Mouse) protein is Retrotransposon Gag-like protein 9.